The primary structure comprises 407 residues: Formamidase (407 aa).

Homotrimer.

It carries out the reaction formamide + H2O = formate + NH4(+). Its function is as follows. Hydrolyzes formamide with the production of ammonia which can be used as a source of nitrogen for growth. Also acts, more slowly, on acetamide, propanamide and butanamide. The chain is Formamidase (fmdA) from Methylophilus methylotrophus (Bacterium W3A1).